The following is a 543-amino-acid chain: uncharacterized protein (543 aa).

Residues 203 to 460 form the Radical SAM core domain; it reads NYPYIIAEIE…FLWFKEKVRE (258 aa). In terms of domain architecture, TRAM spans 470–534; the sequence is VVPKGTILRD…RRSITGKVVR (65 aa).

This is an uncharacterized protein from Methanocaldococcus jannaschii (strain ATCC 43067 / DSM 2661 / JAL-1 / JCM 10045 / NBRC 100440) (Methanococcus jannaschii).